The primary structure comprises 475 residues: uncharacterized protein (475 aa).

This is an uncharacterized protein from Acheta domesticus (House cricket).